The sequence spans 196 residues: Putative NADH dehydrogenase/NAD(P)H nitroreductase PXO_03909 (196 aa).

This sequence belongs to the nitroreductase family. HadB/RutE subfamily. The cofactor is FMN.

This chain is Putative NADH dehydrogenase/NAD(P)H nitroreductase PXO_03909, found in Xanthomonas oryzae pv. oryzae (strain PXO99A).